Reading from the N-terminus, the 388-residue chain is Succinate--CoA ligase [ADP-forming] subunit beta (388 aa).

The ATP-grasp domain occupies 9-244 (KQLFAEYGLP…PSQDDPREAH (236 aa)). ATP-binding positions include Lys46, 53-55 (GRG), Glu99, Thr102, and Glu107. Mg(2+) is bound by residues Asn199 and Asp213. Substrate-binding positions include Asn264 and 321–323 (GIV).

Belongs to the succinate/malate CoA ligase beta subunit family. As to quaternary structure, heterotetramer of two alpha and two beta subunits. Mg(2+) is required as a cofactor.

It catalyses the reaction succinate + ATP + CoA = succinyl-CoA + ADP + phosphate. The enzyme catalyses GTP + succinate + CoA = succinyl-CoA + GDP + phosphate. The protein operates within carbohydrate metabolism; tricarboxylic acid cycle; succinate from succinyl-CoA (ligase route): step 1/1. In terms of biological role, succinyl-CoA synthetase functions in the citric acid cycle (TCA), coupling the hydrolysis of succinyl-CoA to the synthesis of either ATP or GTP and thus represents the only step of substrate-level phosphorylation in the TCA. The beta subunit provides nucleotide specificity of the enzyme and binds the substrate succinate, while the binding sites for coenzyme A and phosphate are found in the alpha subunit. The protein is Succinate--CoA ligase [ADP-forming] subunit beta of Stutzerimonas stutzeri (strain A1501) (Pseudomonas stutzeri).